Reading from the N-terminus, the 554-residue chain is MDIKRTVLWVIFFMSAVMLYDNWQRDHGRPSMFFPSATQTAPAAASGASGTGATTTAGEAPAAAAAGAAPATTAPAAQAQLVKFSTDVYDGEIDTRGGTLAKLTLKKQGDGKQPDLYITLFDHTAGHTYLARTGLLGGDFPNHNDVYTQLNPGATSLTGDQNTLKLSFESPVKGGVKVVKTYTFTRGSYVIGVDTKIDNVGTAPVTPTVYMELVRDNTAVETPMFSHTFLGPAVYTDAKHFQKINFSDLDKNKADYVNSADNGWVAMVQHYFASAWIPQQGVKRDIYAEKIDPSLYRVGVKQPVAAIAPGQSADVQARLFAGPEEERMLEGIAPGLELVKDYGWVTIIAKPLFWLLEKIHGVVGNWGWAIVLLTILIKAVFFPLSAASYKSMARMKEITPRMQALRERFKSDPQKMNAALMELYKTEKVNPFGGCLPVVIQIPVFISLYWVLLASVEMRGAPWILWIHDLSQRDPFFILPVLMAVSMYVQTSLNPTPPDPVQAKMMKFMPIAFSVMFFFFPAGLVLYYVVNNVLSIAQQYYITRKLGGVKKKPA.

5 helical membrane passes run 7–24 (VLWV…DNWQ), 362–382 (VVGN…AVFF), 436–456 (LPVV…LASV), 475–495 (PFFI…SLNP), and 510–530 (PIAF…YYVV).

The protein belongs to the OXA1/ALB3/YidC family. Type 1 subfamily. Interacts with the Sec translocase complex via SecD. Specifically interacts with transmembrane segments of nascent integral membrane proteins during membrane integration.

It is found in the cell inner membrane. In terms of biological role, required for the insertion and/or proper folding and/or complex formation of integral membrane proteins into the membrane. Involved in integration of membrane proteins that insert both dependently and independently of the Sec translocase complex, as well as at least some lipoproteins. Aids folding of multispanning membrane proteins. The protein is Membrane protein insertase YidC of Burkholderia vietnamiensis (strain G4 / LMG 22486) (Burkholderia cepacia (strain R1808)).